A 360-amino-acid chain; its full sequence is uncharacterized protein (360 aa).

The 30-residue stretch at K11–E40 folds into the 4Fe-4S ferredoxin-type domain.

It belongs to the FrhB family.

This is an uncharacterized protein from Methanocaldococcus jannaschii (strain ATCC 43067 / DSM 2661 / JAL-1 / JCM 10045 / NBRC 100440) (Methanococcus jannaschii).